Here is a 340-residue protein sequence, read N- to C-terminus: MKKQKIAVLGPGSWGTALAQVLNDNGHEVRIWGNIPEQIDEINEKHTNTRYFKDVILDENIKAYKELSEALDSVNAILFVVPTKVTRLVAKQVAELLDHKVVVMHASKGLEPGTHERLSTILEEEIPSEMRSEIVVVSGPSHAEETIVRDITLITAASKDLETARYVQGIFSNSYFRLYTNSDVIGVETAGALKNIIAVGAGALHGMGYGDNAKAAIITRGLAEITRLGVKLGADPLTYSGLSGVGDLIVTGTSIHSRNWRAGYALGRGEKLEDIERNMGMVIEGISTTKVAYEIAQELGVYMPITTAIYKSIYEGADIKESILDMMSNELRSENEWDKK.

NADPH-binding residues include Ser13, Trp14, and Lys108. Sn-glycerol 3-phosphate is bound by residues Lys108, Gly139, and Ser141. Residue Ala143 coordinates NADPH. Residues Lys194, Asp247, Ser257, Arg258, and Asn259 each contribute to the sn-glycerol 3-phosphate site. Residue Lys194 is the Proton acceptor of the active site. Residue Arg258 participates in NADPH binding. NADPH contacts are provided by Val282 and Glu284.

The protein belongs to the NAD-dependent glycerol-3-phosphate dehydrogenase family.

The protein resides in the cytoplasm. It carries out the reaction sn-glycerol 3-phosphate + NAD(+) = dihydroxyacetone phosphate + NADH + H(+). The enzyme catalyses sn-glycerol 3-phosphate + NADP(+) = dihydroxyacetone phosphate + NADPH + H(+). It participates in membrane lipid metabolism; glycerophospholipid metabolism. Its function is as follows. Catalyzes the reduction of the glycolytic intermediate dihydroxyacetone phosphate (DHAP) to sn-glycerol 3-phosphate (G3P), the key precursor for phospholipid synthesis. The polypeptide is Glycerol-3-phosphate dehydrogenase [NAD(P)+] (Streptococcus thermophilus (strain ATCC BAA-491 / LMD-9)).